Here is a 423-residue protein sequence, read N- to C-terminus: CinA-like protein (423 aa).

The protein belongs to the CinA family.

This is CinA-like protein from Prochlorococcus marinus (strain SARG / CCMP1375 / SS120).